A 244-amino-acid polypeptide reads, in one-letter code: MGQKVNPISNRLGIIRGWDSNWYGGNDYGDSLLEDSKIRKYLNARLAKASVSRIVIERTLKLVTITVCTARPGIIIGKGGQEVDKLKEELKKVTDKDIQINIFEVKRPELDAVIVANNIARQVEGKIAYRRAIKMAIANTMRMGAEGIKIQISGRLNGAEMARSEMYKEGRTPLHTFRADIDYCHAEALTKVGLLGIKVWICRGEVFGKRELAPNFTQSKESGRGNNGGNNGGGKNFKRKKNNR.

A KH type-2 domain is found at 38–106 (IRKYLNARLA…DIQINIFEVK (69 aa)). The disordered stretch occupies residues 217 to 244 (TQSKESGRGNNGGNNGGGKNFKRKKNNR). Gly residues predominate over residues 225–235 (GNNGGNNGGGK).

The protein belongs to the universal ribosomal protein uS3 family. Part of the 30S ribosomal subunit. Forms a tight complex with proteins S10 and S14.

Its function is as follows. Binds the lower part of the 30S subunit head. Binds mRNA in the 70S ribosome, positioning it for translation. This Bacteroides fragilis (strain ATCC 25285 / DSM 2151 / CCUG 4856 / JCM 11019 / LMG 10263 / NCTC 9343 / Onslow / VPI 2553 / EN-2) protein is Small ribosomal subunit protein uS3.